A 141-amino-acid chain; its full sequence is Hemoglobin subunit alpha (141 aa).

Positions 1–141 (VLSSTDKSNV…VSTVLTSKYR (141 aa)) constitute a Globin domain. Ser-3 bears the Phosphoserine mark. Residues Lys-7 and Lys-11 each carry the N6-succinyllysine modification. Lys-16 is subject to N6-acetyllysine; alternate. Lys-16 is modified (N6-succinyllysine; alternate). Tyr-24 is subject to Phosphotyrosine. Ser-35 bears the Phosphoserine mark. Lys-40 is modified (N6-succinyllysine). Position 58 (His-58) interacts with O2. Residue His-87 coordinates heme b. Ser-102 carries the post-translational modification Phosphoserine. Thr-108 carries the post-translational modification Phosphothreonine. Phosphoserine is present on residues Ser-124 and Ser-131. Residues Thr-134 and Thr-137 each carry the phosphothreonine modification. Phosphoserine is present on Ser-138.

The protein belongs to the globin family. Heterotetramer of two alpha chains and two beta chains. In terms of tissue distribution, red blood cells.

Its function is as follows. Involved in oxygen transport from the lung to the various peripheral tissues. Functionally, hemopressin acts as an antagonist peptide of the cannabinoid receptor CNR1. Hemopressin-binding efficiently blocks cannabinoid receptor CNR1 and subsequent signaling. The polypeptide is Hemoglobin subunit alpha (HBA) (Pteropus alecto (Black flying fox)).